Here is a 196-residue protein sequence, read N- to C-terminus: Putative archaetidylserine decarboxylase proenzyme (196 aa).

The Schiff-base intermediate with substrate; via pyruvic acid role is filled by Ser164. Position 164 is a pyruvic acid (Ser); by autocatalysis (Ser164).

It belongs to the phosphatidylserine decarboxylase family. PSD-A subfamily. As to quaternary structure, heterodimer of a large membrane-associated beta subunit and a small pyruvoyl-containing alpha subunit. The cofactor is pyruvate. Is synthesized initially as an inactive proenzyme. Formation of the active enzyme involves a self-maturation process in which the active site pyruvoyl group is generated from an internal serine residue via an autocatalytic post-translational modification. Two non-identical subunits are generated from the proenzyme in this reaction, and the pyruvate is formed at the N-terminus of the alpha chain, which is derived from the carboxyl end of the proenzyme. The post-translation cleavage follows an unusual pathway, termed non-hydrolytic serinolysis, in which the side chain hydroxyl group of the serine supplies its oxygen atom to form the C-terminus of the beta chain, while the remainder of the serine residue undergoes an oxidative deamination to produce ammonia and the pyruvoyl prosthetic group on the alpha chain.

Its subcellular location is the cell membrane. It catalyses the reaction archaetidylserine + H(+) = archaetidylethanolamine + CO2. Functionally, catalyzes the formation of archaetidylethanolamine (PtdEtn) from archaetidylserine (PtdSer). In Halobacterium salinarum (strain ATCC 700922 / JCM 11081 / NRC-1) (Halobacterium halobium), this protein is Putative archaetidylserine decarboxylase proenzyme.